A 225-amino-acid polypeptide reads, in one-letter code: Fibronectin type III domain-containing protein 10 (225 aa).

The first 19 residues, 1-19, serve as a signal peptide directing secretion; sequence MRAPPLLLLLAACAPPSGA. The Extracellular portion of the chain corresponds to 20–181; the sequence is AVDPTPPGWE…FTAEPAAMQE (162 aa). In terms of domain architecture, Fibronectin type-III spans 72–167; sequence LASAGGSLRA…ELAAAPPELA (96 aa). Residues N86 and N109 are each glycosylated (N-linked (GlcNAc...) asparagine). A helical membrane pass occupies residues 182–202; sequence IVVAMTAVGGSICVMLVVICL. Residues 203–225 are Cytoplasmic-facing; the sequence is LVAYITENLMHPTFRRPSLRRQP.

Its subcellular location is the membrane. This chain is Fibronectin type III domain-containing protein 10 (Fndc10), found in Rattus norvegicus (Rat).